The chain runs to 192 residues: Thymidine kinase (192 aa).

ATP is bound by residues 9-16 (SAMNAGKT) and 88-91 (DECH). Catalysis depends on glutamate 89, which acts as the Proton acceptor. Residues cysteine 146, cysteine 148, cysteine 183, and histidine 186 each coordinate Zn(2+).

This sequence belongs to the thymidine kinase family. In terms of assembly, homotetramer.

It localises to the cytoplasm. The enzyme catalyses thymidine + ATP = dTMP + ADP + H(+). The protein is Thymidine kinase of Blochmanniella floridana.